Here is a 409-residue protein sequence, read N- to C-terminus: Na(+)-translocating NADH-quinone reductase subunit F (409 aa).

The chain crosses the membrane as a helical span at residues 5-25 (FIFGIGAFTAIVLVLAVVILI). The 95-residue stretch at 34–128 (GDITISINDD…SMDVELPEEV (95 aa)) folds into the 2Fe-2S ferredoxin-type domain. [2Fe-2S] cluster-binding residues include cysteine 71, cysteine 77, cysteine 80, and cysteine 112. Residues 131–271 (VKKWECTVIS…SGPFGEFFAK (141 aa)) enclose the FAD-binding FR-type domain.

This sequence belongs to the NqrF family. Composed of six subunits; NqrA, NqrB, NqrC, NqrD, NqrE and NqrF. [2Fe-2S] cluster is required as a cofactor. The cofactor is FAD.

The protein resides in the cell inner membrane. The catalysed reaction is a ubiquinone + n Na(+)(in) + NADH + H(+) = a ubiquinol + n Na(+)(out) + NAD(+). In terms of biological role, NQR complex catalyzes the reduction of ubiquinone-1 to ubiquinol by two successive reactions, coupled with the transport of Na(+) ions from the cytoplasm to the periplasm. The first step is catalyzed by NqrF, which accepts electrons from NADH and reduces ubiquinone-1 to ubisemiquinone by a one-electron transfer pathway. In Actinobacillus succinogenes (strain ATCC 55618 / DSM 22257 / CCUG 43843 / 130Z), this protein is Na(+)-translocating NADH-quinone reductase subunit F.